The chain runs to 393 residues: Formate-dependent phosphoribosylglycinamide formyltransferase (393 aa).

N(1)-(5-phospho-beta-D-ribosyl)glycinamide is bound by residues 22-23 (EL) and glutamate 82. ATP is bound by residues arginine 114, lysine 155, 160 to 165 (SSGKGQ), 195 to 198 (EGFV), and glutamate 203. The ATP-grasp domain maps to 119–308 (RLAAEELGLV…EFALHVRAIL (190 aa)). Mg(2+)-binding residues include glutamate 267 and glutamate 279. N(1)-(5-phospho-beta-D-ribosyl)glycinamide is bound by residues aspartate 286, lysine 356, and 363–364 (RR).

Belongs to the PurK/PurT family. In terms of assembly, homodimer.

The enzyme catalyses N(1)-(5-phospho-beta-D-ribosyl)glycinamide + formate + ATP = N(2)-formyl-N(1)-(5-phospho-beta-D-ribosyl)glycinamide + ADP + phosphate + H(+). Its pathway is purine metabolism; IMP biosynthesis via de novo pathway; N(2)-formyl-N(1)-(5-phospho-D-ribosyl)glycinamide from N(1)-(5-phospho-D-ribosyl)glycinamide (formate route): step 1/1. In terms of biological role, involved in the de novo purine biosynthesis. Catalyzes the transfer of formate to 5-phospho-ribosyl-glycinamide (GAR), producing 5-phospho-ribosyl-N-formylglycinamide (FGAR). Formate is provided by PurU via hydrolysis of 10-formyl-tetrahydrofolate. This is Formate-dependent phosphoribosylglycinamide formyltransferase from Solidesulfovibrio magneticus (strain ATCC 700980 / DSM 13731 / RS-1) (Desulfovibrio magneticus).